A 336-amino-acid polypeptide reads, in one-letter code: Major histocompatibility complex class I-related protein 1 (336 aa).

A signal peptide spans 1–18 (MMLLLPLIIVLMMKLSDA). Residues 19-105 (RTHSLRYFRL…KQLQHHYNHS (87 aa)) form an alpha-1 region. Positions 19-197 (RTHSLRYFRL…EYGKDALQRT (179 aa)) are antigen-binding cleft. Topologically, residues 19–298 (RTHSLRYFRL…QESETILLVV (280 aa)) are extracellular. 8-(9H-purin-6-yl)-2-oxa-8-azabicyclo[3.3.1]nona-3,6-diene-4,6-dicarbaldehyde is bound by residues tyrosine 25 and arginine 27. 5-(2-oxoethylideneamino)-6-(D-ribitylamino)uracil contacts are provided by arginine 27, serine 42, and lysine 61. Residues arginine 27, serine 42, and lysine 61 each contribute to the 5-(2-oxopropylideneamino)-6-(D-ribitylamino)uracil site. 7-hydroxy-6-methyl-8-(1-D-ribityl)lumazine contacts are provided by arginine 27, serine 42, and lysine 61. Positions 61 and 76 each coordinate 8-(9H-purin-6-yl)-2-oxa-8-azabicyclo[3.3.1]nona-3,6-diene-4,6-dicarbaldehyde. Lysine 61 provides a ligand contact to 2-amino-4-oxopteridine-6-carbaldehyde. Lysine 61 contacts pyridoxal. Asparagine 103 carries N-linked (GlcNAc...) asparagine glycosylation. The alpha-2 stretch occupies residues 106–197 (GFHTYQRMIG…EYGKDALQRT (92 aa)). Position 112 (arginine 112) interacts with 8-(9H-purin-6-yl)-2-oxa-8-azabicyclo[3.3.1]nona-3,6-diene-4,6-dicarbaldehyde. 5-(2-oxoethylideneamino)-6-(D-ribitylamino)uracil contacts are provided by arginine 112, tyrosine 170, and glutamine 171. The 5-(2-oxopropylideneamino)-6-(D-ribitylamino)uracil site is built by arginine 112, tyrosine 170, and glutamine 171. Residues arginine 112, tyrosine 170, and glutamine 171 each contribute to the 7-hydroxy-6-methyl-8-(1-D-ribityl)lumazine site. Cystine bridges form between cysteine 116-cysteine 179 and cysteine 218-cysteine 274. The alpha-3 stretch occupies residues 198–289 (EPPKVRVNHK…GVHMVLQGFQ (92 aa)). Positions 200–295 (PKVRVNHKET…QGFQESETIL (96 aa)) constitute an Ig-like C1-type domain. Positions 290–298 (ESETILLVV) are connecting peptide. The helical transmembrane segment at 299–319 (KAVGFIVLAIALAGVGILAWR) threads the bilayer. Topologically, residues 320 to 336 (KRPRGKNKVICLSTPEH) are cytoplasmic.

It belongs to the MHC class I family. In terms of assembly, heterotrimer that consists of MR1, B2M and metabolite antigen. Major classes of metabolite ligands presented by MR1 include riboflavin-related antigens, pyrimidines and ribityl lumazines, nucleobase adducts and folate derivatives. Forms reversible covalent Schiff base complexes with microbial pyrimidine-based metabolite, which serves as a molecular switch triggering complete folding, stable association with B2M and translocation of the ternary complex from endoplasmic reticulum to the plasma membrane. Alternatively, forms non-Schiff base complexes with ribityl lumazines. On antigen-presenting cells, the ternary complex interacts with TCR on MR1-restricted T cells. Interacts with TAPBP and TAPBPL chaperones in the endoplasmic reticulum. TAPBP associated or not with MHC class I peptide loading complex binds ligand-free MR1 or MR1-B2M complex, providing for stable MR1 pools ready for metabolite antigen processing. TAPBPL interacts with MR1 in a ligand-independent way; this interaction may stabilize MR1 pool and facilitate ligand loading and dissociation. Structurally, MR1-B2M heterodimer adopts a topology similar to classical MHC class I molecules, with alpha-1 and alpha-2 domains of MR1 forming the antigen-binding cleft composed of two alpha-helices resting on a floor of 7-stranded anti-parallel beta-pleated sheet. MR1-B2M heterodimer (via alpha-helices) interacts with TCR (via CDR domains). N-glycosylated.

The protein localises to the cell membrane. The protein resides in the endoplasmic reticulum membrane. It localises to the golgi apparatus membrane. Its subcellular location is the early endosome membrane. It is found in the late endosome membrane. Antigen-presenting molecule specialized in displaying microbial pyrimidine-based metabolites to alpha-beta T cell receptors (TCR) on innate-type mucosal-associated invariant T (MAIT) cells. In complex with B2M preferentially presents riboflavin-derived metabolites to semi-invariant TCRs on MAIT cells, guiding immune surveillance of the microbial metabolome at mucosal epithelial barriers. Signature pyrimidine-based microbial antigens are generated via non-enzymatic condensation of metabolite intermediates of the riboflavin pathway with by-products arising from other metabolic pathways such as glycolysis. Typical potent antigenic metabolites are 5-(2-oxoethylideneamino)-6-D-ribitylaminouracil (5-OE-RU) and 5-(2-oxopropylideneamino)-6-D-ribitylaminouracil (5-OP-RU), products of condensation of 5-amino-6-D-ribityaminouracil (5-A-RU) with glyoxal or methylglyoxal by-products, respectively. May present microbial antigens to various MAIT cell subsets, providing for unique recognition of diverse microbes, including pathogens that do not synthesize riboflavin. Upon antigen recognition, elicits rapid innate-type MAIT cell activation to eliminate pathogenic microbes by directly killing infected cells. During T cell development, drives thymic selection and post-thymic terminal differentiation of MAIT cells in a process dependent on commensal microflora. Acts as an immune sensor of cancer cell metabolome. May present a tumor-specific or -associated metabolite essential for cancer cell survival to a pan-cancer TCR on a non-MAIT CD8-positive T cell clone, triggering T cell-mediated killing of a wide range of cancer cell types. May present tumor-enriched pyridoxal and pyridoxal 5'-phosphate antigens, enabling preferential recognition of cancer cells. Presents nucleobase carbonyl adducts generated during oxidative stress. Captures M3Ade, a nucleobase adduct composed of one adenine modified by a malondialdehyde trimer, for recognition by MR1-restricted T cell clones expressing a polyclonal TCR repertoire. The sequence is that of Major histocompatibility complex class I-related protein 1 from Bos taurus (Bovine).